A 218-amino-acid chain; its full sequence is Flagellar calcium-binding protein TB-24 (218 aa).

The disordered stretch occupies residues 1–27 (MGCSASKDTTNSKDGAASKGGKDGKTT). EF-hand domains are found at residues 48 to 83 (ESKSRRIELFKQFDTNGTGKLGFREVLDGCYGILKL), 84 to 119 (DEFTTHLPDIVQRAFDKAKDLGNKVKGVGEEDLVEF), 130 to 165 (YDIFELTVMFDTMDKDGSLLLELQEFKEALPKLKEW), and 167 to 202 (VDITDATTVFNEIDTNGSGVVTFDEFSCWAVTKKLQ). Ca(2+) contacts are provided by D61, N63, T65, K67, and E72. Ca(2+)-binding residues include D143, D145, S147, E154, D180, N182, S184, and E191.

It belongs to the calflagin family.

The protein resides in the cell projection. Its subcellular location is the cilium. It localises to the flagellum. Its function is as follows. May contribute to the rapid motility of the trypanosomes, playing a role either in flagellar structure or in calcium metabolism. Could alternate between a GDP-bound inactive form to a calcium/GTP-bound active form. This is Flagellar calcium-binding protein TB-24 from Trypanosoma brucei brucei.